The primary structure comprises 55 residues: Antiviral protein GAP-31 (55 aa).

The tract at residues 29–55 (KPEGNSHGIPSLRKSSDDPGSSFVVAG) is disordered.

The protein belongs to the ribosome-inactivating protein family. Type 1 RIP subfamily.

The catalysed reaction is Endohydrolysis of the N-glycosidic bond at one specific adenosine on the 28S rRNA.. Functionally, single-chain ribosome-inactivating protein, possessing high antiviral potency and low toxicity to normal cells in culture and to intact animals. Capable of inhibiting HIV-1 infection and replication. The polypeptide is Antiviral protein GAP-31 (Suregada multiflora (False lime)).